A 94-amino-acid chain; its full sequence is Small ribosomal subunit protein uS19 (94 aa).

The interval 73 to 94 (EFAPTRTYRGHGKDAERTTRRR) is disordered. Residues 83-94 (HGKDAERTTRRR) show a composition bias toward basic and acidic residues.

This sequence belongs to the universal ribosomal protein uS19 family.

In terms of biological role, protein S19 forms a complex with S13 that binds strongly to the 16S ribosomal RNA. The chain is Small ribosomal subunit protein uS19 from Thermomicrobium roseum (strain ATCC 27502 / DSM 5159 / P-2).